The primary structure comprises 45 residues: Protein PsbN (45 aa).

A helical transmembrane segment spans residues 12-30 (FLSRSLVSFTGYALYTAFG).

It belongs to the PsbN family.

The protein resides in the plastid. It localises to the chloroplast thylakoid membrane. Its function is as follows. May play a role in photosystem I and II biogenesis. The protein is Protein PsbN of Adiantum capillus-veneris (Maidenhair fern).